Here is a 510-residue protein sequence, read N- to C-terminus: Sphingolipid C9-methyltransferase B (510 aa).

Asn55 carries an N-linked (GlcNAc...) asparagine glycan. A run of 2 helical transmembrane segments spans residues Leu62–Ala82 and Thr84–Ala104. A glycan (N-linked (GlcNAc...) asparagine) is linked at Asn175. Residues Tyr227–Thr228, Met264–Gly272, Thr290–Gln295, and Tyr320–Arg321 each bind S-adenosyl-L-methionine. An N-linked (GlcNAc...) asparagine glycan is attached at Asn294.

The protein belongs to the CFA/CMAS family.

It is found in the membrane. The catalysed reaction is a (4E,8E)-4-sphinga-4,8-dienine ceramide + S-adenosyl-L-methionine = a 9-methyl-(4E,8E)-sphinga-4,8-dienine ceramide + S-adenosyl-L-homocysteine + H(+). It functions in the pathway lipid metabolism; sphingolipid metabolism. Its function is as follows. Catalyzes methylation of the sphingoid base component of glucosylceramides (GluCers) at the C9-position. Sphingolipid C9-methylation requires 4,8-desaturated ceramides as substrates. Glucosylceramides play important roles in growth, differentiation and pathogenicity. The methyl group at the C9-position distinguishes fungal glucosylceramides from those of plants and animals and may thus play a role in host-pathogen interactions enabling the host to recognize the fungal attack and initiate specific defense responses. The protein is Sphingolipid C9-methyltransferase B of Emericella nidulans (strain FGSC A4 / ATCC 38163 / CBS 112.46 / NRRL 194 / M139) (Aspergillus nidulans).